The following is a 352-amino-acid chain: CD5 antigen-like (352 aa).

Residues 1–21 (MAPLFNLMLAILSIFVGSCFS) form the signal peptide. 3 SRCR domains span residues 27–128 (VQLV…AQCE), 141–241 (VRLV…MECE), and 246–348 (LKLV…VICT). 11 cysteine pairs are disulfide-bonded: Cys-36–Cys-70, Cys-52–Cys-117, Cys-65–Cys-127, Cys-98–Cys-108, Cys-166–Cys-230, Cys-179–Cys-240, Cys-211–Cys-221, Cys-255–Cys-289, Cys-271–Cys-337, Cys-284–Cys-347, and Cys-317–Cys-327. Residue Asn-99 is glycosylated (N-linked (GlcNAc...) asparagine). A glycan (N-linked (GlcNAc...) asparagine) is linked at Asn-229.

In terms of assembly, interacts with FASN; the interaction is direct. Interacts (via SRCR2 and SRCR3) with pentameric IgM (via Fc region); disulfide-linked. Post-translationally, N-glycosylated. N-glycan at Asn-99 possesses only alpha2,6-sialylated terminals, while Asn-229 possesses both alpha2,6-sialylated and non-sialylated terminals. N-glycosylation increases secretion. In terms of tissue distribution, specifically expressed in tissue macrophages. Expressed in thymus, liver, spleen and lymph nodes. Present in Th17 cells; mainly present in non-pathogenic Th17 cells.

The protein localises to the secreted. It localises to the cytoplasm. In terms of biological role, secreted protein that acts as a key regulator of lipid synthesis: mainly expressed by macrophages in lymphoid and inflamed tissues and regulates mechanisms in inflammatory responses, such as infection or atherosclerosis. Able to inhibit lipid droplet size in adipocytes. Following incorporation into mature adipocytes via CD36-mediated endocytosis, associates with cytosolic FASN, inhibiting fatty acid synthase activity and leading to lipolysis, the degradation of triacylglycerols into glycerol and free fatty acids (FFA). CD5L-induced lipolysis occurs with progression of obesity: participates in obesity-associated inflammation following recruitment of inflammatory macrophages into adipose tissues, a cause of insulin resistance and obesity-related metabolic disease. Regulation of intracellular lipids mediated by CD5L has a direct effect on transcription regulation mediated by nuclear receptors ROR-gamma (RORC). Acts as a key regulator of metabolic switch in T-helper Th17 cells. Regulates the expression of pro-inflammatory genes in Th17 cells by altering the lipid content and limiting synthesis of cholesterol ligand of RORC, the master transcription factor of Th17-cell differentiation. CD5L is mainly present in non-pathogenic Th17 cells, where it decreases the content of polyunsaturated fatty acyls (PUFA), affecting two metabolic proteins MSMO1 and CYP51A1, which synthesize ligands of RORC, limiting RORC activity and expression of pro-inflammatory genes. Participates in obesity-associated autoimmunity via its association with IgM, interfering with the binding of IgM to Fcalpha/mu receptor and enhancing the development of long-lived plasma cells that produce high-affinity IgG autoantibodies. Also acts as an inhibitor of apoptosis in macrophages: promotes macrophage survival from the apoptotic effects of oxidized lipids in case of atherosclerosis. Involved in early response to microbial infection against various pathogens by acting as a pattern recognition receptor and by promoting autophagy. The sequence is that of CD5 antigen-like (Cd5l) from Mus musculus (Mouse).